Reading from the N-terminus, the 129-residue chain is Aspartate 1-decarboxylase (129 aa).

S25 functions as the Schiff-base intermediate with substrate; via pyruvic acid in the catalytic mechanism. S25 is subject to Pyruvic acid (Ser). T57 is a binding site for substrate. Residue Y58 is the Proton donor of the active site. Substrate is bound at residue 73-75; that stretch reads GAA.

Belongs to the PanD family. As to quaternary structure, heterooctamer of four alpha and four beta subunits. Requires pyruvate as cofactor. Post-translationally, is synthesized initially as an inactive proenzyme, which is activated by self-cleavage at a specific serine bond to produce a beta-subunit with a hydroxyl group at its C-terminus and an alpha-subunit with a pyruvoyl group at its N-terminus.

It is found in the cytoplasm. It carries out the reaction L-aspartate + H(+) = beta-alanine + CO2. The protein operates within cofactor biosynthesis; (R)-pantothenate biosynthesis; beta-alanine from L-aspartate: step 1/1. Functionally, catalyzes the pyruvoyl-dependent decarboxylation of aspartate to produce beta-alanine. The chain is Aspartate 1-decarboxylase from Chlorobium chlorochromatii (strain CaD3).